The chain runs to 247 residues: ATP synthase subunit a, chloroplastic (247 aa).

5 consecutive transmembrane segments (helical) span residues 38-58, 95-115, 134-154, 199-219, and 220-240; these read QVLI…IIAV, VPFI…GALL, INTT…AGLT, LVVV…VMFL, and GLFT…AYIG.

This sequence belongs to the ATPase A chain family. As to quaternary structure, F-type ATPases have 2 components, CF(1) - the catalytic core - and CF(0) - the membrane proton channel. CF(1) has five subunits: alpha(3), beta(3), gamma(1), delta(1), epsilon(1). CF(0) has four main subunits: a, b, b' and c.

It is found in the plastid. It localises to the chloroplast thylakoid membrane. In terms of biological role, key component of the proton channel; it plays a direct role in the translocation of protons across the membrane. This Morus indica (Mulberry) protein is ATP synthase subunit a, chloroplastic.